A 374-amino-acid polypeptide reads, in one-letter code: Chaperone protein DnaJ (374 aa).

The J domain occupies 5-70; the sequence is DYYEVLGVER…SKRAAFDQYG (66 aa). The CR-type zinc finger occupies 133-211; it reads GTTVSIRVPT…CHGEGRVEEY (79 aa). Zn(2+)-binding residues include Cys-146, Cys-149, Cys-163, Cys-166, Cys-185, Cys-188, Cys-199, and Cys-202. CXXCXGXG motif repeat units lie at residues 146 to 153, 163 to 170, 185 to 192, and 199 to 206; these read CQPCDGSG, CPTCGGIG, CPRCHGQG, and CTSCHGEG.

It belongs to the DnaJ family. In terms of assembly, homodimer. It depends on Zn(2+) as a cofactor.

The protein resides in the cytoplasm. Its function is as follows. Participates actively in the response to hyperosmotic and heat shock by preventing the aggregation of stress-denatured proteins and by disaggregating proteins, also in an autonomous, DnaK-independent fashion. Unfolded proteins bind initially to DnaJ; upon interaction with the DnaJ-bound protein, DnaK hydrolyzes its bound ATP, resulting in the formation of a stable complex. GrpE releases ADP from DnaK; ATP binding to DnaK triggers the release of the substrate protein, thus completing the reaction cycle. Several rounds of ATP-dependent interactions between DnaJ, DnaK and GrpE are required for fully efficient folding. Also involved, together with DnaK and GrpE, in the DNA replication of plasmids through activation of initiation proteins. This Pseudomonas putida (strain ATCC 700007 / DSM 6899 / JCM 31910 / BCRC 17059 / LMG 24140 / F1) protein is Chaperone protein DnaJ.